Here is a 485-residue protein sequence, read N- to C-terminus: MMRYGSAATVTTSETASSQKPGGVCRLRLTLPAEASLRPKQEEINRDTSVNADIRSTNERRKKRNGYVLSEKNTAEPPTLHLYTIPKNNTPSAVASSGVVYGVVQRAENNHQNEVVVYEWSTNQLKEEMNYIKDVRGTLEKIREKMFGEYDEMKQKVKQLTQEIKVSSVQKEFLESHSQAQSTALDTFGTINSSLNAASIEMQKTLVDMTLENTNIKDEMKNIKHSYEESLVRLKEKQQLLDSAQNENQLLKVKIESSQEANAEVMREMTRKLYSQYEEKLRQEELKYTAEKDMLVDQTRQYLKAIEDASEKVRLAENKIEERDAKIAELDKLVHRMEQEREHLQDQLIRHEERIQDLDNRMQMQSPDRNQRLEEVATSLRERIKHLDDMVHCQQKKVKHMIEEIELLKKKVHYKDLLIQQLLERIAFLEGENTELQDKVDYLMANKPKTDKETKDIGTSCNLSESQRILTVCVTENEARSIFSI.

Positions 1 to 18 (MMRYGSAATVTTSETASS) are enriched in low complexity. Disordered stretches follow at residues 1–21 (MMRYGSAATVTTSETASSQKP) and 40–65 (KQEEINRDTSVNADIRSTNERRKKRN).

The protein belongs to the MYZAP family.

The sequence is that of Myocardial zonula adherens protein (myzap) from Xenopus tropicalis (Western clawed frog).